The following is a 136-amino-acid chain: uncharacterized protein (136 aa).

4 helical membrane passes run Ser10–Ile32, Leu44–Phe66, Val70–Leu89, and Ile102–Phe124.

The protein localises to the cell membrane. This is an uncharacterized protein from Archaeoglobus fulgidus (strain ATCC 49558 / DSM 4304 / JCM 9628 / NBRC 100126 / VC-16).